Reading from the N-terminus, the 330-residue chain is Mucin-15 (330 aa).

A signal peptide spans 1–23; that stretch reads MLTSAKILLISILSSLLLFGSHG. Residues 23-115 are disordered; the sequence is GEEGQKTNTT…SPRSPSTHSF (93 aa). The Extracellular segment spans residues 24–232; the sequence is EEGQKTNTTE…SDPQEENRNT (209 aa). N-linked (GlcNAc...) asparagine glycosylation is found at Asn30, Asn44, Asn54, Asn71, Asn79, Asn89, Asn94, Asn122, Asn138, Asn147, Asn154, Asn162, Asn175, Asn214, and Asn221. Polar residues predominate over residues 42–56; the sequence is MENQSVPLESKANLT. Positions 86 to 115 are enriched in polar residues; it reads FYSNLSTDNSSRSPSLMPTLSPRSPSTHSF. A disordered region spans residues 164–185; that stretch reads SITVSNLPSGPNTTSVTPMVTE. Residues 233–253 traverse the membrane as a helical segment; that stretch reads GVVFGAILGAILGASLLSLVG. Over 254–330 the chain is Cytoplasmic; sequence YLLCGKRKTD…DDIPPLRTSV (77 aa). Residues 279–330 form a disordered region; it reads LRLDNAPEPYDMSFGNSSYYNPTANDSSTSAGGENAHDSIPMDDIPPLRTSV. Polar residues predominate over residues 292 to 310; the sequence is FGNSSYYNPTANDSSTSAG.

Post-translationally, highly glycosylated (N- and O-linked carbohydrates). As to expression, mainly expressed on apical surfaces of the mammary epithelial cells.

Its subcellular location is the cell membrane. The protein localises to the secreted. The chain is Mucin-15 (MUC15) from Bos taurus (Bovine).